Reading from the N-terminus, the 293-residue chain is 4-diphosphocytidyl-2-C-methyl-D-erythritol kinase (293 aa).

Lys16 is an active-site residue. An ATP-binding site is contributed by 99–109; that stretch reads PMGAGLGGGSS. The active site involves Asp141.

Belongs to the GHMP kinase family. IspE subfamily.

It carries out the reaction 4-CDP-2-C-methyl-D-erythritol + ATP = 4-CDP-2-C-methyl-D-erythritol 2-phosphate + ADP + H(+). The protein operates within isoprenoid biosynthesis; isopentenyl diphosphate biosynthesis via DXP pathway; isopentenyl diphosphate from 1-deoxy-D-xylulose 5-phosphate: step 3/6. In terms of biological role, catalyzes the phosphorylation of the position 2 hydroxy group of 4-diphosphocytidyl-2C-methyl-D-erythritol. This chain is 4-diphosphocytidyl-2-C-methyl-D-erythritol kinase, found in Burkholderia thailandensis (strain ATCC 700388 / DSM 13276 / CCUG 48851 / CIP 106301 / E264).